Here is a 348-residue protein sequence, read N- to C-terminus: Dihydroorotase (348 aa).

Zn(2+)-binding residues include H17 and H19. Residues 19-21 (HLR) and N45 contribute to the substrate site. 3 residues coordinate Zn(2+): K103, H140, and H178. Position 103 is an N6-carboxylysine (K103). Position 140 (H140) interacts with substrate. L223 contributes to the substrate binding site. D251 contacts Zn(2+). Residue D251 is part of the active site. Substrate contacts are provided by H255 and A267.

The protein belongs to the metallo-dependent hydrolases superfamily. DHOase family. Class II DHOase subfamily. Homodimer. It depends on Zn(2+) as a cofactor.

The catalysed reaction is (S)-dihydroorotate + H2O = N-carbamoyl-L-aspartate + H(+). The protein operates within pyrimidine metabolism; UMP biosynthesis via de novo pathway; (S)-dihydroorotate from bicarbonate: step 3/3. Catalyzes the reversible cyclization of carbamoyl aspartate to dihydroorotate. The protein is Dihydroorotase of Salmonella typhi.